A 576-amino-acid polypeptide reads, in one-letter code: D-lactate dehydrogenase [cytochrome], mitochondrial (576 aa).

In terms of domain architecture, FAD-binding PCMH-type spans 139–320 (EANQRPEIVL…TEATIKCHVR (182 aa)).

Belongs to the FAD-binding oxidoreductase/transferase type 4 family. Requires FAD as cofactor. Zn(2+) serves as cofactor.

Its subcellular location is the mitochondrion matrix. It carries out the reaction (R)-lactate + 2 Fe(III)-[cytochrome c] = 2 Fe(II)-[cytochrome c] + pyruvate + 2 H(+). In terms of biological role, catalyzes the stereospecific oxidation of D-lactate to pyruvate. In Kluyveromyces lactis (strain ATCC 8585 / CBS 2359 / DSM 70799 / NBRC 1267 / NRRL Y-1140 / WM37) (Yeast), this protein is D-lactate dehydrogenase [cytochrome], mitochondrial (DLD1).